Consider the following 209-residue polypeptide: Large ribosomal subunit protein uL3 (209 aa).

Residues 117–142 (FQGPIKRHGQSRGPETHGSRYHRRPG) form a disordered region.

The protein belongs to the universal ribosomal protein uL3 family. In terms of assembly, part of the 50S ribosomal subunit. Forms a cluster with proteins L14 and L19.

One of the primary rRNA binding proteins, it binds directly near the 3'-end of the 23S rRNA, where it nucleates assembly of the 50S subunit. The polypeptide is Large ribosomal subunit protein uL3 (Clostridioides difficile (strain 630) (Peptoclostridium difficile)).